Reading from the N-terminus, the 545-residue chain is Endo-beta-N-acetylglucosaminidase (545 aa).

Residues 1–36 (MTFIKQMMPRYVASMTAGIVAAAMAATCAFAPVANA) form the signal peptide. The region spanning 51 to 333 (RHFMVYYRAW…EDLRRIVPSN (283 aa)) is the GH18 domain. Catalysis depends on Glu-184, which acts as the Proton donor. Positions 486–511 (PVPTPDSTDQNGNRDKVTNHKVQGQP) are disordered. The helical transmembrane segment at 518-538 (GISTDIIVAVGVTLAIAGVAL) threads the bilayer.

Belongs to the glycosyl hydrolase 18 family.

The protein resides in the cell membrane. The catalysed reaction is an N(4)-(oligosaccharide-(1-&gt;3)-[oligosaccharide-(1-&gt;6)]-beta-D-Man-(1-&gt;4)-beta-D-GlcNAc-(1-&gt;4)-alpha-D-GlcNAc)-L-asparaginyl-[protein] + H2O = an oligosaccharide-(1-&gt;3)-[oligosaccharide-(1-&gt;6)]-beta-D-Man-(1-&gt;4)-D-GlcNAc + N(4)-(N-acetyl-beta-D-glucosaminyl)-L-asparaginyl-[protein]. Endoglycosidase with broad specificity that cleaves the chitobiose core of high mannose and complex N-linked glycans. Is able to release N-glycans from diverse host glycoproteins such as human and bovine lactoferrin, immunoglobulins A and G, and ribonuclease B. Is active directly on human breast milk - a complex matrix of lipids, oligosaccharides, and proteins with disparate glycosylation types - successfully removing a significant proportion of the total amount of N-glycans. Does not recognize O-linked glycans or free human milk oligosaccharides (HMO). The polypeptide is Endo-beta-N-acetylglucosaminidase (Bifidobacterium longum subsp. infantis (strain ATCC 15697 / DSM 20088 / JCM 1222 / NCTC 11817 / S12)).